Here is a 512-residue protein sequence, read N- to C-terminus: 3-ketoacyl-CoA synthase 9 (512 aa).

The next 2 helical transmembrane spans lie at 44 to 64 and 83 to 103; these read LITHLFKLCLVPLMAVLVTEI and LVAFIFLSALAIFGSTVYIMS. One can recognise an FAE domain in the interval 100–389; that stretch reads YIMSRPRSVY…FFMTLVTKKL (290 aa). Residues cysteine 244, histidine 323, histidine 407, histidine 411, histidine 440, and asparagine 444 contribute to the active site.

The protein belongs to the thiolase-like superfamily. Chalcone/stilbene synthases family. Expressed in seedlings, stems, leaves, flowers and siliques. Expressed in roots, leaves, and stems, including epidermis, silique walls, sepals, the upper portion of the styles, and seed coats, but not in developing embryos.

The protein localises to the endoplasmic reticulum membrane. The catalysed reaction is a very-long-chain acyl-CoA + malonyl-CoA + H(+) = a very-long-chain 3-oxoacyl-CoA + CO2 + CoA. It participates in lipid metabolism; fatty acid biosynthesis. Its function is as follows. Involved in the elongation of C22 to C24 fatty acids, which are precursors for the biosynthesis of cuticular waxes, aliphatic suberins, and membrane lipids, including sphingolipids and phospholipids. The chain is 3-ketoacyl-CoA synthase 9 from Arabidopsis thaliana (Mouse-ear cress).